The following is a 156-amino-acid chain: 6,7-dimethyl-8-ribityllumazine synthase (156 aa).

Residues Phe25, 59-61 (AWE), and 83-85 (AVI) contribute to the 5-amino-6-(D-ribitylamino)uracil site. Residue 88 to 89 (ST) participates in (2S)-2-hydroxy-3-oxobutyl phosphate binding. His91 functions as the Proton donor in the catalytic mechanism. Position 116 (Asn116) interacts with 5-amino-6-(D-ribitylamino)uracil. Arg130 is a (2S)-2-hydroxy-3-oxobutyl phosphate binding site.

Belongs to the DMRL synthase family. In terms of assembly, forms an icosahedral capsid composed of 60 subunits, arranged as a dodecamer of pentamers.

It carries out the reaction (2S)-2-hydroxy-3-oxobutyl phosphate + 5-amino-6-(D-ribitylamino)uracil = 6,7-dimethyl-8-(1-D-ribityl)lumazine + phosphate + 2 H2O + H(+). The protein operates within cofactor biosynthesis; riboflavin biosynthesis; riboflavin from 2-hydroxy-3-oxobutyl phosphate and 5-amino-6-(D-ribitylamino)uracil: step 1/2. In terms of biological role, catalyzes the formation of 6,7-dimethyl-8-ribityllumazine by condensation of 5-amino-6-(D-ribitylamino)uracil with 3,4-dihydroxy-2-butanone 4-phosphate. This is the penultimate step in the biosynthesis of riboflavin. This Acinetobacter baumannii (strain AB0057) protein is 6,7-dimethyl-8-ribityllumazine synthase.